The following is a 320-amino-acid chain: Protein TsetseEP (320 aa).

The first 19 residues, 1-19, serve as a signal peptide directing secretion; it reads MKFFISFAFLCLVLSCVAA. The segment at 192 to 320 is disordered; that stretch reads GLPEPEPEPE…ESKPNSLFNF (129 aa). A compositionally biased stretch (acidic residues) spans 194–308; sequence PEPEPEPEPE…EPEPEPEPQP (115 aa). A 59 X 2 AA tandem repeats of P-E region spans residues 194–311; that stretch reads PEPEPEPEPE…PEPEPQPEPE (118 aa).

As to expression, expressed in the gut, but not salivary glands, of female and male flies (at protein level). Present in vesicles in midgut cells and in the lumen of the gut.

The protein localises to the secreted. The sequence is that of Protein TsetseEP from Glossina morsitans morsitans (Savannah tsetse fly).